The chain runs to 128 residues: Large ribosomal subunit protein uL24 (128 aa).

This sequence belongs to the universal ribosomal protein uL24 family. Part of the 50S ribosomal subunit.

In terms of biological role, one of two assembly initiator proteins, it binds directly to the 5'-end of the 23S rRNA, where it nucleates assembly of the 50S subunit. Functionally, located at the polypeptide exit tunnel on the outside of the subunit. The protein is Large ribosomal subunit protein uL24 of Pyrobaculum calidifontis (strain DSM 21063 / JCM 11548 / VA1).